The following is a 377-amino-acid chain: Probable isocitrate dehydrogenase [NAD] subunit alpha, mitochondrial (377 aa).

Substrate contacts are provided by Arg-131, Arg-141, Arg-162, and Asp-249. Mg(2+)-binding residues include Asp-249, Asp-273, and Asp-277.

This sequence belongs to the isocitrate and isopropylmalate dehydrogenases family. As to quaternary structure, heterooligomer of subunits alpha, beta, and gamma in the apparent ratio of 2:1:1. It depends on Mg(2+) as a cofactor. Mn(2+) serves as cofactor.

It localises to the mitochondrion. The catalysed reaction is D-threo-isocitrate + NAD(+) = 2-oxoglutarate + CO2 + NADH. In terms of biological role, probable catalytic subunit of the enzyme which catalyzes the decarboxylation of isocitrate (ICT) into alpha-ketoglutarate. This chain is Probable isocitrate dehydrogenase [NAD] subunit alpha, mitochondrial, found in Drosophila melanogaster (Fruit fly).